A 326-amino-acid polypeptide reads, in one-letter code: Eukaryotic translation initiation factor 3 subunit I (326 aa).

WD repeat units lie at residues 8-47 (GHER…RLGT), 50-89 (GHQG…VIAS), 145-184 (MTES…KVVD), 188-227 (DHSA…CLKT), and 285-326 (GHFG…NIFE).

It belongs to the eIF-3 subunit I family. In terms of assembly, component of the eukaryotic translation initiation factor 3 (eIF-3) complex. The eIF-3 complex interacts with pix.

The protein localises to the cytoplasm. Component of the eukaryotic translation initiation factor 3 (eIF-3) complex, which is involved in protein synthesis of a specialized repertoire of mRNAs and, together with other initiation factors, stimulates binding of mRNA and methionyl-tRNAi to the 40S ribosome. The eIF-3 complex specifically targets and initiates translation of a subset of mRNAs involved in cell proliferation. This is Eukaryotic translation initiation factor 3 subunit I from Drosophila simulans (Fruit fly).